Consider the following 637-residue polypeptide: Extracellular metalloproteinase 2 (637 aa).

Residues 1–20 (MRSFLLASLASVATLKSAQA) form the signal peptide. Residues 21–244 (HPAHSTRGLS…VHAVVDYSAD (224 aa)) constitute a propeptide that is removed on maturation. N-linked (GlcNAc...) asparagine glycosylation is found at N302, N328, N337, and N413. Residue H430 participates in Zn(2+) binding. E431 is a catalytic residue. H434 is a binding site for Zn(2+).

It belongs to the peptidase M36 family. Requires Zn(2+) as cofactor.

It is found in the secreted. In terms of biological role, secreted metalloproteinase that allows assimilation of proteinaceous substrates. The chain is Extracellular metalloproteinase 2 (MEP2) from Phaeosphaeria nodorum (strain SN15 / ATCC MYA-4574 / FGSC 10173) (Glume blotch fungus).